Here is a 914-residue protein sequence, read N- to C-terminus: Ubiquitin carboxyl-terminal hydrolase 20 (914 aa).

The UBP-type zinc finger occupies 6–111 (DLCPHLDSIG…GSSSKFSEQD (106 aa)). Residues Cys-8, His-10, Cys-30, Cys-33, Cys-43, Cys-48, Cys-53, His-60, His-64, His-70, Cys-83, and Cys-86 each contribute to the Zn(2+) site. Ser-112, Ser-132, and Ser-134 each carry phosphoserine. Residues 145–685 (TGMKNLGNSC…EGYVLFYRKS (541 aa)) form the USP domain. Cys-154 serves as the catalytic Nucleophile. Disordered stretches follow at residues 257–347 (LTEA…VDED) and 360–415 (QPAE…ASPV). Thr-258 is subject to Phosphothreonine. Basic and acidic residues predominate over residues 259 to 279 (EARDSDSSDTDEKREGDRSPS). Ser-305 is subject to Phosphoserine. Positions 316–332 (EAGRAISEKERMKDRKF) are enriched in basic and acidic residues. Ser-368 is subject to Phosphoserine. A Phosphothreonine modification is found at Thr-377. 2 positions are modified to phosphoserine: Ser-408 and Ser-413. His-643 (proton acceptor) is an active-site residue. 2 DUSP domains span residues 687–780 (EEAM…LYVC) and 789–892 (ALAK…RQSV).

This sequence belongs to the peptidase C19 family. USP20/USP33 subfamily. In terms of assembly, interacts with VHL, leading to its ubiquitination and subsequent degradation. Interacts with CCP110. Interacts with DIO2. Interacts with HIF1A. Interacts with ADRB2. Interacts with USP18. Post-translationally, ubiquitinated via a VHL-dependent pathway for proteasomal degradation.

Its subcellular location is the cytoplasm. The protein localises to the endoplasmic reticulum. The protein resides in the perinuclear region. It is found in the cytoskeleton. It localises to the microtubule organizing center. Its subcellular location is the centrosome. The catalysed reaction is Thiol-dependent hydrolysis of ester, thioester, amide, peptide and isopeptide bonds formed by the C-terminal Gly of ubiquitin (a 76-residue protein attached to proteins as an intracellular targeting signal).. Functionally, deubiquitinating enzyme that plays a role in many cellular processes including autophagy, cellular antiviral response or membrane protein biogenesis. Attenuates TLR4-mediated NF-kappa-B signaling by cooperating with beta-arrestin-2/ARRB2 and inhibiting TRAF6 autoubiquitination. Promotes cellular antiviral responses by deconjugating 'Lys-33' and 'Lys-48'-linked ubiquitination of STING1 leading to its stabilization. Plays an essential role in autophagy induction by regulating the ULK1 stability through deubiquitination of ULK1. Acts as a positive regulator for NF-kappa-B activation by TNF-alpha through deubiquitinating 'Lys-48'-linked polyubiquitination of SQSTM1, leading to its increased stability. Acts as a regulator of G-protein coupled receptor (GPCR) signaling by mediating the deubiquitination beta-2 adrenergic receptor (ADRB2). Plays a central role in ADRB2 recycling and resensitization after prolonged agonist stimulation by constitutively binding ADRB2, mediating deubiquitination of ADRB2 and inhibiting lysosomal trafficking of ADRB2. Upon dissociation, it is probably transferred to the translocated beta-arrestins, possibly leading to beta-arrestins deubiquitination and disengagement from ADRB2. This suggests the existence of a dynamic exchange between the ADRB2 and beta-arrestins. Deubiquitinates DIO2, thereby regulating thyroid hormone regulation. Deubiquitinates HIF1A, leading to stabilize HIF1A and enhance HIF1A-mediated activity. Deubiquitinates MCL1, a pivotal member of the anti-apoptotic Bcl-2 protein family to regulate its stability. Within the endoplasmic reticulum, participates with USP33 in the rescue of post-translationally targeted membrane proteins that are inappropriately ubiquitinated by the cytosolic protein quality control in the cytosol. This Homo sapiens (Human) protein is Ubiquitin carboxyl-terminal hydrolase 20 (USP20).